A 323-amino-acid polypeptide reads, in one-letter code: tRNA U34 carboxymethyltransferase (323 aa).

Carboxy-S-adenosyl-L-methionine contacts are provided by residues Lys-91, Trp-105, Lys-110, Gly-130, 152 to 154 (DPS), 181 to 182 (IE), Met-196, Tyr-200, and Arg-315.

The protein belongs to the class I-like SAM-binding methyltransferase superfamily. CmoB family. In terms of assembly, homotetramer.

The enzyme catalyses carboxy-S-adenosyl-L-methionine + 5-hydroxyuridine(34) in tRNA = 5-carboxymethoxyuridine(34) in tRNA + S-adenosyl-L-homocysteine + H(+). Functionally, catalyzes carboxymethyl transfer from carboxy-S-adenosyl-L-methionine (Cx-SAM) to 5-hydroxyuridine (ho5U) to form 5-carboxymethoxyuridine (cmo5U) at position 34 in tRNAs. This chain is tRNA U34 carboxymethyltransferase, found in Vibrio campbellii (strain ATCC BAA-1116).